Consider the following 286-residue polypeptide: Fructose-bisphosphate aldolase (286 aa).

S50 contacts D-glyceraldehyde 3-phosphate. D85 acts as the Proton donor in catalysis. Zn(2+) contacts are provided by H86, D107, E137, and H181. G182 contacts dihydroxyacetone phosphate. Position 209 (H209) interacts with Zn(2+). Dihydroxyacetone phosphate contacts are provided by residues 210–212 (GGT) and 231–234 (NVNT).

This sequence belongs to the class II fructose-bisphosphate aldolase family. The cofactor is Zn(2+).

It carries out the reaction beta-D-fructose 1,6-bisphosphate = D-glyceraldehyde 3-phosphate + dihydroxyacetone phosphate. The protein operates within carbohydrate degradation; glycolysis; D-glyceraldehyde 3-phosphate and glycerone phosphate from D-glucose: step 4/4. Functionally, catalyzes the aldol condensation of dihydroxyacetone phosphate (DHAP or glycerone-phosphate) with glyceraldehyde 3-phosphate (G3P) to form fructose 1,6-bisphosphate (FBP) in gluconeogenesis and the reverse reaction in glycolysis. This chain is Fructose-bisphosphate aldolase (fba), found in Staphylococcus aureus (strain MSSA476).